We begin with the raw amino-acid sequence, 195 residues long: MSEVTGDGAVAAEAIDPRRFRTVLGQFCTGVTIITTIDDGVPVGFACQSFAALSLEPPLVLFCPTKTSRSWAAIERSGIFCVNVLAEEQQSTCARFGSRDPDKFAGIDWTESPLGSPILTGSLAHIDCSLESVHDGGDHWVAFGRVSSLSEIREERPLLFYRGQYTGIEPDKTVPAPWRDDLEAFLTTSSEDTWL.

Residues 42-46, 48-49, 63-65, 69-70, and 95-96 contribute to the FAD site; these read PVGFA, QS, CPT, RS, and RF. Residue 160-163 participates in NAD(+) binding; that stretch reads FYRG.

Belongs to the non-flavoprotein flavin reductase family. In terms of assembly, hsaAB monooxygenase consists of an oxygenase component HsaA and a reductase component HsaB.

The catalysed reaction is a reduced flavin + NAD(+) = an oxidized flavin + NADH + 2 H(+). The protein operates within lipid metabolism; steroid biosynthesis. In terms of biological role, catalyzes the reduction of free flavins (FMN or FAD) by NADH. Subsequently, the reduced flavins diffuse to the HsaA oxygenase subunit. This is Flavin-dependent monooxygenase, reductase subunit HsaB (hsaB) from Rhodococcus jostii (strain RHA1).